Reading from the N-terminus, the 409-residue chain is Protein a6 (409 aa).

Ser86 bears the Phosphoserine mark. Positions 106 to 120 (RAHRTGRRQAPRRAA) are enriched in basic residues. Residues 106-165 (RAHRTGRRQAPRRAATHSYPVTDSILITSDDEHNEQEPSSTARVRSQLSMRSPPPLAPLT) are disordered. Phosphothreonine is present on Thr133. Phosphoserine is present on Ser134. The span at 142-155 (EPSSTARVRSQLSM) shows a compositional bias: polar residues.

The protein is Protein a6 (a6) of Drosophila melanogaster (Fruit fly).